Consider the following 379-residue polypeptide: Carbamoyl phosphate synthase small chain (379 aa).

The segment at 1–189 (MSKLALLVLE…GLPEAKDDSE (189 aa)) is CPSase. Ser47, Gly241, and Gly243 together coordinate L-glutamine. The Glutamine amidotransferase type-1 domain occupies 193–379 (HVVAYDFGAK…FIELIKKHSA (187 aa)). The active-site Nucleophile is the Cys269. Positions 270, 273, 311, 313, and 314 each coordinate L-glutamine. Active-site residues include His353 and Glu355.

It belongs to the CarA family. In terms of assembly, composed of two chains; the small (or glutamine) chain promotes the hydrolysis of glutamine to ammonia, which is used by the large (or ammonia) chain to synthesize carbamoyl phosphate. Tetramer of heterodimers (alpha,beta)4.

It carries out the reaction hydrogencarbonate + L-glutamine + 2 ATP + H2O = carbamoyl phosphate + L-glutamate + 2 ADP + phosphate + 2 H(+). It catalyses the reaction L-glutamine + H2O = L-glutamate + NH4(+). It functions in the pathway amino-acid biosynthesis; L-arginine biosynthesis; carbamoyl phosphate from bicarbonate: step 1/1. It participates in pyrimidine metabolism; UMP biosynthesis via de novo pathway; (S)-dihydroorotate from bicarbonate: step 1/3. Functionally, small subunit of the glutamine-dependent carbamoyl phosphate synthetase (CPSase). CPSase catalyzes the formation of carbamoyl phosphate from the ammonia moiety of glutamine, carbonate, and phosphate donated by ATP, constituting the first step of 2 biosynthetic pathways, one leading to arginine and/or urea and the other to pyrimidine nucleotides. The small subunit (glutamine amidotransferase) binds and cleaves glutamine to supply the large subunit with the substrate ammonia. The chain is Carbamoyl phosphate synthase small chain from Vibrio parahaemolyticus serotype O3:K6 (strain RIMD 2210633).